A 429-amino-acid polypeptide reads, in one-letter code: Protein arginine N-methyltransferase 2 (429 aa).

2 disordered regions span residues 41-76 (PEVA…EDHE) and 137-180 (ALDS…EETP). The span at 137–163 (ALDSDDEDDEEMAEGEEAQAEDGEEAP) shows a compositional bias: acidic residues. Residues 164–174 (ELVAAEEATQT) show a composition bias toward low complexity. The 240-residue stretch at 190-429 (LEEQVTSDKY…YRLPVCTFLG (240 aa)) folds into the RMT2 domain. S-adenosyl-L-methionine is bound by residues tyrosine 199, methionine 228, 250–255 (FGMGII), 271–273 (EAH), 308–309 (WQ), and aspartate 328.

Belongs to the class I-like SAM-binding methyltransferase superfamily. RMT2 methyltransferase family. Monomer.

The protein localises to the cytoplasm. It localises to the nucleus. Its function is as follows. S-adenosyl-L-methionine-dependent protein-arginine N-methyltransferase that methylates the delta-nitrogen atom of arginine residues to form N5-methylarginine (type IV) in target proteins. Monomethylates ribosomal protein L12. This is Protein arginine N-methyltransferase 2 from Neurospora crassa (strain ATCC 24698 / 74-OR23-1A / CBS 708.71 / DSM 1257 / FGSC 987).